The chain runs to 515 residues: Maturase K (515 aa).

The protein belongs to the intron maturase 2 family. MatK subfamily.

It localises to the plastid. The protein localises to the chloroplast. Its function is as follows. Usually encoded in the trnK tRNA gene intron. Probably assists in splicing its own and other chloroplast group II introns. This chain is Maturase K, found in Pinus densiflora (Japanese red pine).